The sequence spans 359 residues: AA9 family lytic polysaccharide monooxygenase C (359 aa).

The N-terminal stretch at 1-16 (MKTGSILAALVASASA) is a signal peptide. The Cu(2+) site is built by His-17 and His-99. 2 disulfide bridges follow: Cys-55/Cys-185 and Cys-155/Cys-243. O2-binding residues include His-171 and Gln-180. Tyr-182 provides a ligand contact to Cu(2+). N-linked (GlcNAc...) asparagine glycosylation is found at Asn-189 and Asn-284. The tract at residues 244–320 (PAGGSGGSSP…NPQPTNGGNS (77 aa)) is disordered. Positions 251 to 296 (SSPAPATTASTPKPTSASAPKPVSTTASTPKPTNGSGSGTGAAHST) are enriched in low complexity. Over residues 307-319 (TKASNPQPTNGGN) the composition is skewed to polar residues. The CBM1 domain occupies 323-358 (RAAALYGQCGGKGWTGPTSCASGTCKFSNDWYSQCL).

The protein belongs to the polysaccharide monooxygenase AA9 family. Cu(2+) is required as a cofactor.

The protein resides in the secreted. It carries out the reaction [(1-&gt;4)-beta-D-glucosyl]n+m + reduced acceptor + O2 = 4-dehydro-beta-D-glucosyl-[(1-&gt;4)-beta-D-glucosyl]n-1 + [(1-&gt;4)-beta-D-glucosyl]m + acceptor + H2O.. With respect to regulation, activity in inhibited by excessive amounts of H(2)O(2). In terms of biological role, lytic polysaccharide monooxygenase (LPMO) that depolymerizes crystalline and amorphous polysaccharides via the oxidation of scissile alpha- or beta-(1-4)-glycosidic bonds, yielding C4 oxidation products. Catalysis by LPMOs requires the reduction of the active-site copper from Cu(II) to Cu(I) by a reducing agent and H(2)O(2) or O(2) as a cosubstrate. Degrades various hemicelluloses, in particular xyloglucan. Active on tamarind xyloglucan and konjac glucomannan. Acts on the glucose backbone of xyloglucan, accepting various substitutions (xylose, galactose) in almost allpositions. In contrast to all previously characterized LPMOs, which are active only on polysaccharides, is able to cleave soluble cello-oligosaccharides as short as a tetramer. The cello-oligosaccharide products released by this enzyme contain a C4 gemdiol/keto group at the non-reducing end. Binds to the inner wood cell wall layer and consumes enzymatically generated H(2)O(2). This is AA9 family lytic polysaccharide monooxygenase C (gh61-3) from Neurospora crassa (strain ATCC 24698 / 74-OR23-1A / CBS 708.71 / DSM 1257 / FGSC 987).